The sequence spans 178 residues: Large ribosomal subunit protein uL6 (178 aa).

This sequence belongs to the universal ribosomal protein uL6 family. As to quaternary structure, part of the 50S ribosomal subunit.

In terms of biological role, this protein binds to the 23S rRNA, and is important in its secondary structure. It is located near the subunit interface in the base of the L7/L12 stalk, and near the tRNA binding site of the peptidyltransferase center. The polypeptide is Large ribosomal subunit protein uL6 (Staphylococcus epidermidis (strain ATCC 35984 / DSM 28319 / BCRC 17069 / CCUG 31568 / BM 3577 / RP62A)).